The sequence spans 481 residues: Glutamyl-tRNA(Gln) amidotransferase subunit A (481 aa).

Catalysis depends on charge relay system residues Lys76 and Ser151. Ser175 functions as the Acyl-ester intermediate in the catalytic mechanism.

This sequence belongs to the amidase family. GatA subfamily. Heterotrimer of A, B and C subunits.

The catalysed reaction is L-glutamyl-tRNA(Gln) + L-glutamine + ATP + H2O = L-glutaminyl-tRNA(Gln) + L-glutamate + ADP + phosphate + H(+). In terms of biological role, allows the formation of correctly charged Gln-tRNA(Gln) through the transamidation of misacylated Glu-tRNA(Gln) in organisms which lack glutaminyl-tRNA synthetase. The reaction takes place in the presence of glutamine and ATP through an activated gamma-phospho-Glu-tRNA(Gln). This is Glutamyl-tRNA(Gln) amidotransferase subunit A from Neisseria gonorrhoeae (strain NCCP11945).